The sequence spans 476 residues: MAHEPDSQTVRLWGGRFSGGPSEALARLSQSTHFDWRLARYDIAGSRAHARVLHAAGLLDDAELAQMLRGLDQLEADVASGAFTPSPDDEDVHTALERGFIERVGPELGGRLRAGRSRNDQIATLVRMYLREEARAITALLLDLVAALADQAEANLDVPMPGRTHLQHAQPVLLAHHLMAHAWPLIRDIERLRDWDRRADMSAYGSGALAGSSLGLDPEAVAAELGFSRSVPNSIDGTAARDVVAEFAFVAAMIGVDLSRISEEIILWATKEFSFITLDDAFSTGSSIMPQKKNPDIAELARGKAGRLIGDLAGLLSTLKGLPLAYNRDLQEDKEPVFDAVDTLKVLLPAFTGMVATLTVNRERMAELAPQGFSLATDIAEWLVRQRVPFREAHEIAGACVRVCEERGIDLPDLSDADLAAISPHLTPQVREVLTVQGSLESRAARGGTAPARVREQLAELRKAIDDHRAFTQSHA.

This sequence belongs to the lyase 1 family. Argininosuccinate lyase subfamily.

It is found in the cytoplasm. It catalyses the reaction 2-(N(omega)-L-arginino)succinate = fumarate + L-arginine. It participates in amino-acid biosynthesis; L-arginine biosynthesis; L-arginine from L-ornithine and carbamoyl phosphate: step 3/3. The protein is Argininosuccinate lyase of Thermobifida fusca (strain YX).